Consider the following 366-residue polypeptide: ERCC4 domain-containing protein EP364R (366 aa).

One can recognise an ERCC4 domain in the interval 3 to 101; it reads FLVADHREHH…QLYFFVEGPA (99 aa). 2 stretches are compositionally biased toward polar residues: residues 320-331 and 349-366; these read RPTMQVATQPAA and PTGH…TVRC. The interval 320–366 is disordered; sequence RPTMQVATQPAATQPLHKVSDDASSDASSPTGHQTLSKEMSLNTVRC.

This sequence belongs to the asfivirus EP364R family.

In terms of biological role, plays a role in the inhibition of type I interferon signaling pathway. Mechanistically, specifically interacts with 2',3'-cGAMP and cleaves it via its phosphodiesterase activity. In turn, prevents 2',3'-cGAMP interaction with host ER-resident STING1 leading to inhibition of downstream signaling pathway and type I interferon production. This Ornithodoros (relapsing fever ticks) protein is ERCC4 domain-containing protein EP364R.